A 306-amino-acid chain; its full sequence is Protein FdhE homolog (306 aa).

This sequence belongs to the FdhE family.

It localises to the cytoplasm. Necessary for formate dehydrogenase activity. The polypeptide is Protein FdhE homolog (Proteus mirabilis (strain HI4320)).